The following is a 493-amino-acid chain: Ectonucleoside triphosphate diphosphohydrolase 8 (493 aa).

The Cytoplasmic portion of the chain corresponds to 1-7 (MEYKGKV). A helical membrane pass occupies residues 8-28 (VAGLLTATCVFSIIALILSAV). Residues 29–463 (DVKDVFLPPG…ALEHVKGHEP (435 aa)) lie on the Extracellular side of the membrane. N-linked (GlcNAc...) asparagine glycans are attached at residues Asn-65, Asn-79, and Asn-133. Cys-76 and Cys-100 form a disulfide bridge. Glu-166 functions as the Proton acceptor in the catalytic mechanism. Residues Asn-223, Asn-234, Asn-267, Asn-324, Asn-330, Asn-361, Asn-372, Asn-382, and Asn-445 are each glycosylated (N-linked (GlcNAc...) asparagine). A disulfide bridge links Cys-244 with Cys-291. Residues Cys-327 and Cys-333 are joined by a disulfide bond. Cysteines 379 and 401 form a disulfide. Residues 464–486 (SLWAGAISFIVLAIVAGLVAILL) traverse the membrane as a helical segment. Topologically, residues 487-493 (QCFWKSK) are cytoplasmic.

The protein belongs to the GDA1/CD39 NTPase family. Ca(2+) is required as a cofactor. The cofactor is Mg(2+). N-glycosylated.

It localises to the cell membrane. The enzyme catalyses a ribonucleoside 5'-triphosphate + 2 H2O = a ribonucleoside 5'-phosphate + 2 phosphate + 2 H(+). Its function is as follows. Canalicular ectonucleoside NTPDase responsible for the main hepatic NTPDase activity. Ectonucleoside ATPases catalyze the hydrolysis of gamma- and beta-phosphate residues of nucleotides, playing a central role in concentration of extracellular nucleotides. This chain is Ectonucleoside triphosphate diphosphohydrolase 8 (ENTPD8), found in Gallus gallus (Chicken).